The following is a 254-amino-acid chain: MDLTNKNVIFVAALGGIGLDTSRELVKRNLKNFVILDRVENPTALAELKAINPKVNITFHTYDVTVPVAESKKLLKKIFDQLKTVDILINGAGILDDHQIERTIAINFTGLVNTTTAILDFWDKRKGGPGGIIANICSVTGFNAIHQVPVYSASKAAVVSFTNSLAKLAPITGVTAYSINPGITRTPLVHTFNSWLDVEPRVAELLLSHPTQTSEQCGQNFVKAIEANKNGAIWKLDLGTLEAIEWTKHWDSHI.

Methionine 1 bears the N-acetylmethionine mark. 10–33 lines the NAD(+) pocket; that stretch reads FVAALGGIGLDTSRELVKRNLKNF. Substrate is bound at residue serine 138. The active-site Proton acceptor is tyrosine 151.

Belongs to the short-chain dehydrogenases/reductases (SDR) family. In terms of assembly, homodimer.

It carries out the reaction a primary alcohol + NAD(+) = an aldehyde + NADH + H(+). It catalyses the reaction a secondary alcohol + NAD(+) = a ketone + NADH + H(+). In Drosophila lebanonensis (Fruit fly), this protein is Alcohol dehydrogenase (Adh).